The following is a 160-amino-acid chain: Probable transcriptional regulator YgiV (160 aa).

Functionally, represses expression of mcbR. The chain is Probable transcriptional regulator YgiV (ygiV) from Escherichia coli O157:H7.